Reading from the N-terminus, the 242-residue chain is Probable transcriptional regulatory protein Bxeno_A1185 (242 aa).

This sequence belongs to the TACO1 family.

It localises to the cytoplasm. This Paraburkholderia xenovorans (strain LB400) protein is Probable transcriptional regulatory protein Bxeno_A1185.